A 513-amino-acid chain; its full sequence is Activin receptor type-2A (513 aa).

The N-terminal stretch at Met1–Gly19 is a signal peptide. Over Ala20–Pro135 the chain is Extracellular. 5 disulfide bridges follow: Cys30–Cys60, Cys50–Cys78, Cys85–Cys104, Cys91–Cys103, and Cys105–Cys110. Residues Asn43 and Asn66 are each glycosylated (N-linked (GlcNAc...) asparagine). The chain crosses the membrane as a helical span at residues Tyr136 to Tyr161. Topologically, residues Arg162–Leu513 are cytoplasmic. The Protein kinase domain maps to Leu192–Leu485. ATP-binding positions include Lys198–Val206 and Lys219. The active-site Proton acceptor is the Asp322.

Belongs to the protein kinase superfamily. TKL Ser/Thr protein kinase family. TGFB receptor subfamily. As to quaternary structure, part of a complex consisting of MAGI2/ARIP1, ACVR2A, ACVR1B and SMAD3. Interacts with MAGI2/ARIP1. Interacts with type I receptor ACVR1. Interacts with BMP7. Interacts with TSC22D1/TSC-22. Interacts with activin A/INHBA. Mg(2+) serves as cofactor. Mn(2+) is required as a cofactor.

It localises to the cell membrane. The catalysed reaction is L-threonyl-[receptor-protein] + ATP = O-phospho-L-threonyl-[receptor-protein] + ADP + H(+). It carries out the reaction L-seryl-[receptor-protein] + ATP = O-phospho-L-seryl-[receptor-protein] + ADP + H(+). On ligand binding, forms a receptor complex consisting of two type II and two type I transmembrane serine/threonine kinases. Type II receptors phosphorylate and activate type I receptors which autophosphorylate, then bind and activate SMAD transcriptional regulators. Receptor for activin A, activin B and inhibin A. Mediates induction of adipogenesis by GDF6. This is Activin receptor type-2A (ACVR2A) from Bos taurus (Bovine).